A 362-amino-acid polypeptide reads, in one-letter code: Carbamoyl phosphate synthase small chain (362 aa).

The segment at methionine 1–glycine 172 is CPSase. Serine 45, glycine 224, and glycine 226 together coordinate L-glutamine. In terms of domain architecture, Glutamine amidotransferase type-1 spans lysine 176–glycine 362. Cysteine 252 serves as the catalytic Nucleophile. 5 residues coordinate L-glutamine: leucine 253, glutamine 256, asparagine 294, glycine 296, and phenylalanine 297. Catalysis depends on residues histidine 335 and glutamate 337.

The protein belongs to the CarA family. Composed of two chains; the small (or glutamine) chain promotes the hydrolysis of glutamine to ammonia, which is used by the large (or ammonia) chain to synthesize carbamoyl phosphate. Tetramer of heterodimers (alpha,beta)4.

It carries out the reaction hydrogencarbonate + L-glutamine + 2 ATP + H2O = carbamoyl phosphate + L-glutamate + 2 ADP + phosphate + 2 H(+). The enzyme catalyses L-glutamine + H2O = L-glutamate + NH4(+). It participates in amino-acid biosynthesis; L-arginine biosynthesis; carbamoyl phosphate from bicarbonate: step 1/1. Its pathway is pyrimidine metabolism; UMP biosynthesis via de novo pathway; (S)-dihydroorotate from bicarbonate: step 1/3. Its function is as follows. Small subunit of the glutamine-dependent carbamoyl phosphate synthetase (CPSase). CPSase catalyzes the formation of carbamoyl phosphate from the ammonia moiety of glutamine, carbonate, and phosphate donated by ATP, constituting the first step of 2 biosynthetic pathways, one leading to arginine and/or urea and the other to pyrimidine nucleotides. The small subunit (glutamine amidotransferase) binds and cleaves glutamine to supply the large subunit with the substrate ammonia. In Leptospira interrogans serogroup Icterohaemorrhagiae serovar Lai (strain 56601), this protein is Carbamoyl phosphate synthase small chain.